We begin with the raw amino-acid sequence, 249 residues long: DNA repair protein RecO (249 aa).

It belongs to the RecO family.

Functionally, involved in DNA repair and RecF pathway recombination. In Lactobacillus delbrueckii subsp. bulgaricus (strain ATCC 11842 / DSM 20081 / BCRC 10696 / JCM 1002 / NBRC 13953 / NCIMB 11778 / NCTC 12712 / WDCM 00102 / Lb 14), this protein is DNA repair protein RecO.